Reading from the N-terminus, the 126-residue chain is Histone H2B 8 (126 aa).

Residues 1–12 (MPEPAKSAPAPK) show a composition bias toward low complexity. The disordered stretch occupies residues 1 to 35 (MPEPAKSAPAPKKGSKKAVTKTQKKGDKKRRKTRK). N6-acetyllysine is present on residues lysine 6 and lysine 13. Residues 13–34 (KGSKKAVTKTQKKGDKKRRKTR) show a composition bias toward basic residues. A Phosphoserine modification is found at serine 15. Residues lysine 16 and lysine 21 each carry the N6-acetyllysine modification. A glycan (O-linked (GlcNAc) serine) is linked at serine 113. A Glycyl lysine isopeptide (Lys-Gly) (interchain with G-Cter in ubiquitin) cross-link involves residue lysine 121.

It belongs to the histone H2B family. The nucleosome is a histone octamer containing two molecules each of H2A, H2B, H3 and H4 assembled in one H3-H4 heterotetramer and two H2A-H2B heterodimers. The octamer wraps approximately 147 bp of DNA. Post-translationally, monoubiquitination of Lys-121 by the BRE1 gives a specific tag for epigenetic transcriptional activation and is also prerequisite for histone H3 'Lys-4' and 'Lys-79' methylation. Phosphorylated on Ser-15 during apoptosis; which facilitates apoptotic chromatin condensation. In terms of processing, glcNAcylation at Ser-113 promotes monoubiquitination of Lys-121. It fluctuates in response to extracellular glucose, and associates with transcribed genes.

The protein localises to the nucleus. It localises to the chromosome. Functionally, core component of nucleosome. Nucleosomes wrap and compact DNA into chromatin, limiting DNA accessibility to the cellular machineries which require DNA as a template. Histones thereby play a central role in transcription regulation, DNA repair, DNA replication and chromosomal stability. DNA accessibility is regulated via a complex set of post-translational modifications of histones, also called histone code, and nucleosome remodeling. The polypeptide is Histone H2B 8 (H2B-VIII) (Gallus gallus (Chicken)).